Here is a 348-residue protein sequence, read N- to C-terminus: Dihydroorotate dehydrogenase (quinone) (348 aa).

FMN is bound by residues 65–69 and threonine 89; that span reads AGLDK. Lysine 69 serves as a coordination point for substrate. 114 to 118 provides a ligand contact to substrate; the sequence is NRLGF. FMN is bound by residues asparagine 147 and asparagine 180. Asparagine 180 serves as a coordination point for substrate. Serine 183 serves as the catalytic Nucleophile. Residue asparagine 185 coordinates substrate. The FMN site is built by lysine 225 and threonine 253. 254–255 contributes to the substrate binding site; it reads NT. FMN is bound by residues glycine 276, glycine 305, and 326–327; that span reads YS.

It belongs to the dihydroorotate dehydrogenase family. Type 2 subfamily. Monomer. FMN serves as cofactor.

The protein resides in the cell membrane. It catalyses the reaction (S)-dihydroorotate + a quinone = orotate + a quinol. It participates in pyrimidine metabolism; UMP biosynthesis via de novo pathway; orotate from (S)-dihydroorotate (quinone route): step 1/1. Its function is as follows. Catalyzes the conversion of dihydroorotate to orotate with quinone as electron acceptor. In Delftia acidovorans (strain DSM 14801 / SPH-1), this protein is Dihydroorotate dehydrogenase (quinone).